The chain runs to 88 residues: Small ribosomal subunit protein bS20 (88 aa).

Positions 1-21 (MANSAQAKKRARQNVKARKHN) are disordered. Residues 7-21 (AKKRARQNVKARKHN) show a composition bias toward basic residues.

This sequence belongs to the bacterial ribosomal protein bS20 family.

Binds directly to 16S ribosomal RNA. This Acinetobacter baumannii (strain AB307-0294) protein is Small ribosomal subunit protein bS20.